The primary structure comprises 371 residues: Histidinol-phosphate aminotransferase (371 aa).

Lysine 228 carries the N6-(pyridoxal phosphate)lysine modification.

Belongs to the class-II pyridoxal-phosphate-dependent aminotransferase family. Histidinol-phosphate aminotransferase subfamily. It depends on pyridoxal 5'-phosphate as a cofactor.

The catalysed reaction is L-histidinol phosphate + 2-oxoglutarate = 3-(imidazol-4-yl)-2-oxopropyl phosphate + L-glutamate. Its pathway is amino-acid biosynthesis; L-histidine biosynthesis; L-histidine from 5-phospho-alpha-D-ribose 1-diphosphate: step 7/9. The polypeptide is Histidinol-phosphate aminotransferase (Methanococcus maripaludis (strain C7 / ATCC BAA-1331)).